The chain runs to 556 residues: Putative cysteine ligase BshC (556 aa).

2 coiled-coil regions span residues 408-442 (ILQKHELTLDDAFHRLDDLRQELLEREDRLGIAQA) and 468-513 (LGQV…ANLT).

It belongs to the BshC family.

Involved in bacillithiol (BSH) biosynthesis. May catalyze the last step of the pathway, the addition of cysteine to glucosamine malate (GlcN-Mal) to generate BSH. The polypeptide is Putative cysteine ligase BshC (Symbiobacterium thermophilum (strain DSM 24528 / JCM 14929 / IAM 14863 / T)).